A 745-amino-acid chain; its full sequence is uncharacterized protein (745 aa).

The HTH araC/xylS-type domain maps to 158–256 (NQVCDYIELH…HQTPKQYRGD (99 aa)). DNA-binding regions (H-T-H motif) lie at residues 175–196 (SELS…TESL) and 223–246 (ITDI…KHFT).

This is an uncharacterized protein from Staphylococcus aureus (strain MW2).